The primary structure comprises 341 residues: L-threonine 3-dehydrogenase (341 aa).

Cys38 is a Zn(2+) binding site. Catalysis depends on charge relay system residues Thr40 and His43. 6 residues coordinate Zn(2+): His63, Glu64, Cys93, Cys96, Cys99, and Cys107. Residues Ile175, Asp195, Arg200, 262–264 (LGI), and 286–287 (IY) each bind NAD(+).

It belongs to the zinc-containing alcohol dehydrogenase family. Homotetramer. Zn(2+) serves as cofactor.

The protein resides in the cytoplasm. It carries out the reaction L-threonine + NAD(+) = (2S)-2-amino-3-oxobutanoate + NADH + H(+). The protein operates within amino-acid degradation; L-threonine degradation via oxydo-reductase pathway; glycine from L-threonine: step 1/2. Its function is as follows. Catalyzes the NAD(+)-dependent oxidation of L-threonine to 2-amino-3-ketobutyrate. This chain is L-threonine 3-dehydrogenase, found in Shigella sonnei (strain Ss046).